A 441-amino-acid polypeptide reads, in one-letter code: Probable tRNA pseudouridine synthase D (441 aa).

Asp-89 (nucleophile) is an active-site residue. The region spanning 168–393 (GVPNFFGVQR…SKGTRREVLL (226 aa)) is the TRUD domain.

Belongs to the pseudouridine synthase TruD family.

The catalysed reaction is uridine(13) in tRNA = pseudouridine(13) in tRNA. Its function is as follows. Could be responsible for synthesis of pseudouridine from uracil-13 in transfer RNAs. In Methanosarcina acetivorans (strain ATCC 35395 / DSM 2834 / JCM 12185 / C2A), this protein is Probable tRNA pseudouridine synthase D.